Reading from the N-terminus, the 603-residue chain is F-box only protein 46 (603 aa).

A disordered region spans residues 20–54; it reads YSQNQPRPPSATLKPPVCPDTSSGTEPDHRPAHLE. Ser21 and Ser67 each carry phosphoserine. 4 disordered regions span residues 111–163, 235–301, 332–359, and 396–442; these read GGSR…PTSS, EAQR…TRAK, EASE…ARDC, and TVSP…GTTD. Thr347 is subject to Phosphothreonine. Positions 347–356 are enriched in pro residues; it reads TPPAPPPPPA. Residues 470-522 enclose the F-box domain; sequence RQYMLLLPEHVLVKIFSFLPTRALAALKCTCHHFKGIIEAFGVRATDSRWSRD.

Part of a SCF (SKP1-cullin-F-box) protein ligase complex SCF(FBXO46) composed of CUL1, SKP1, RBX1 and FBXO46. Post-translationally, phosphorylated by ATM in response to DNA damage, promoting ubiquitination and degradation by the SCF(FBXO31) complex. ATM-phosphorylated FBXO46 is ubiquitinated and degradaded by the SCF(FBXO31) complex in response to DNA damage.

It functions in the pathway protein modification; protein ubiquitination. Its function is as follows. Substrate-recognition component of the SCF(FBXO46) protein ligase complex, which mediates the ubiquitination and degradation of target proteins. In absence of stress, the SCF(FBXO46) complex catalyzes ubiquitination and degradation of MTOR-phosphorylated FBXO31. In Rattus norvegicus (Rat), this protein is F-box only protein 46 (Fbxo46).